Here is a 180-residue protein sequence, read N- to C-terminus: Adenine phosphoribosyltransferase (180 aa).

Ser-2 is modified (N-acetylserine). Phosphoserine occurs at positions 4, 15, and 30. At Tyr-60 the chain carries Phosphotyrosine. Position 66 is a phosphoserine (Ser-66). An N6-acetyllysine modification is found at Lys-114. Phosphothreonine is present on Thr-135.

The protein belongs to the purine/pyrimidine phosphoribosyltransferase family. Homodimer.

It localises to the cytoplasm. The catalysed reaction is AMP + diphosphate = 5-phospho-alpha-D-ribose 1-diphosphate + adenine. It participates in purine metabolism; AMP biosynthesis via salvage pathway; AMP from adenine: step 1/1. Its function is as follows. Catalyzes a salvage reaction resulting in the formation of AMP, that is energically less costly than de novo synthesis. The sequence is that of Adenine phosphoribosyltransferase from Mus pahari (Gairdner's shrew-mouse).